The sequence spans 190 residues: NADH dehydrogenase [ubiquinone] iron-sulfur protein 3 (190 aa).

This sequence belongs to the complex I 30 kDa subunit family. As to quaternary structure, complex I is composed of at least 49 different subunits. This is a component of the iron-sulfur (IP) fragment of the enzyme.

Its subcellular location is the mitochondrion inner membrane. It catalyses the reaction a ubiquinone + NADH + 5 H(+)(in) = a ubiquinol + NAD(+) + 4 H(+)(out). Its function is as follows. Core subunit of the mitochondrial membrane respiratory chain NADH dehydrogenase (Complex I) that is believed to belong to the minimal assembly required for catalysis. Complex I functions in the transfer of electrons from NADH to the respiratory chain. The immediate electron acceptor for the enzyme is believed to be ubiquinone. This chain is NADH dehydrogenase [ubiquinone] iron-sulfur protein 3 (NAD9), found in Arabidopsis thaliana (Mouse-ear cress).